Consider the following 345-residue polypeptide: Dihydroorotase (345 aa).

Positions 13 and 15 each coordinate Zn(2+). Substrate-binding positions include 15–17 (HFR) and Asn41. Zn(2+) contacts are provided by Lys98, His135, and His173. The residue at position 98 (Lys98) is an N6-carboxylysine. Substrate is bound at residue His135. Leu218 is a substrate binding site. Asp246 provides a ligand contact to Zn(2+). Residue Asp246 is part of the active site. The substrate site is built by His250 and Ala262.

This sequence belongs to the metallo-dependent hydrolases superfamily. DHOase family. Class II DHOase subfamily. As to quaternary structure, homodimer. Zn(2+) serves as cofactor.

It carries out the reaction (S)-dihydroorotate + H2O = N-carbamoyl-L-aspartate + H(+). It functions in the pathway pyrimidine metabolism; UMP biosynthesis via de novo pathway; (S)-dihydroorotate from bicarbonate: step 3/3. In terms of biological role, catalyzes the reversible cyclization of carbamoyl aspartate to dihydroorotate. In Shewanella pealeana (strain ATCC 700345 / ANG-SQ1), this protein is Dihydroorotase.